The sequence spans 201 residues: Holliday junction resolvase RecU (201 aa).

Thr-85, Asp-87, Asp-100, and Gln-119 together coordinate Mg(2+).

This sequence belongs to the RecU family. Mg(2+) serves as cofactor.

Its subcellular location is the cytoplasm. The catalysed reaction is Endonucleolytic cleavage at a junction such as a reciprocal single-stranded crossover between two homologous DNA duplexes (Holliday junction).. Its function is as follows. Endonuclease that resolves Holliday junction intermediates in genetic recombination. Cleaves mobile four-strand junctions by introducing symmetrical nicks in paired strands. Promotes annealing of linear ssDNA with homologous dsDNA. Required for DNA repair, homologous recombination and chromosome segregation. This is Holliday junction resolvase RecU from Pediococcus pentosaceus (strain ATCC 25745 / CCUG 21536 / LMG 10740 / 183-1w).